A 423-amino-acid chain; its full sequence is Glutamate-1-semialdehyde 2,1-aminomutase (423 aa).

K262 bears the N6-(pyridoxal phosphate)lysine mark.

It belongs to the class-III pyridoxal-phosphate-dependent aminotransferase family. HemL subfamily. As to quaternary structure, homodimer. Pyridoxal 5'-phosphate is required as a cofactor.

The protein resides in the cytoplasm. It carries out the reaction (S)-4-amino-5-oxopentanoate = 5-aminolevulinate. The protein operates within porphyrin-containing compound metabolism; protoporphyrin-IX biosynthesis; 5-aminolevulinate from L-glutamyl-tRNA(Glu): step 2/2. The sequence is that of Glutamate-1-semialdehyde 2,1-aminomutase from Saccharophagus degradans (strain 2-40 / ATCC 43961 / DSM 17024).